The sequence spans 97 residues: Co-chaperonin GroES (97 aa).

This sequence belongs to the GroES chaperonin family. Heptamer of 7 subunits arranged in a ring. Interacts with the chaperonin GroEL.

It localises to the cytoplasm. In terms of biological role, together with the chaperonin GroEL, plays an essential role in assisting protein folding. The GroEL-GroES system forms a nano-cage that allows encapsulation of the non-native substrate proteins and provides a physical environment optimized to promote and accelerate protein folding. GroES binds to the apical surface of the GroEL ring, thereby capping the opening of the GroEL channel. The chain is Co-chaperonin GroES from Pseudomonas putida (strain ATCC 700007 / DSM 6899 / JCM 31910 / BCRC 17059 / LMG 24140 / F1).